We begin with the raw amino-acid sequence, 320 residues long: Sucrose operon repressor (320 aa).

The HTH lacI-type domain maps to 1-55 (MKNIADIAKIAGVSKSTVSRYLNNGSVSLKTQQKLDEIIRENDYQPNQFAQSLRA). A DNA-binding region (H-T-H motif) is located at residues 4 to 23 (IADIAKIAGVSKSTVSRYLN).

In terms of biological role, negative regulator of scrB expression. In Staphylococcus xylosus, this protein is Sucrose operon repressor (scrR).